A 1125-amino-acid chain; its full sequence is tRNA (34-2'-O)-methyltransferase regulator WDR6 (1125 aa).

Met1 bears the N-acetylmethionine mark. 19 WD repeats span residues Val53–Val97, Arg105–Pro143, Cys147–Pro189, Ala200–Val238, Arg247–His285, Ile289–Leu327, Leu335–Leu376, Trp381–Ile422, Pro425–Ala470, Ile476–Val520, Pro559–Gly598, Val604–Pro642, His645–Ala684, Leu739–Val785, Arg848–Leu897, His905–Leu950, Gly974–Leu1016, Glu1040–Leu1077, and Thr1083–Asp1125.

Belongs to the WD repeat WDR6 family. In terms of assembly, interacts with FTSJ1; the interaction is direct, and required for 2'-O-methylation of position 34 in substrate tRNAs. Interacts with IRS4. Interacts with STK11/LKB1.

It is found in the cytoplasm. Functionally, together with methyltransferase FTSJ1, methylates the 2'-O-ribose of nucleotides at position 34 of the tRNA anticodon loop of substrate tRNAs. Required for the correct positioning of the substrate tRNA for methylation. Required to suppress amino acid starvation-induced autophagy. Enhances the STK11/LKB1-induced cell growth suppression activity. This Mus musculus (Mouse) protein is tRNA (34-2'-O)-methyltransferase regulator WDR6 (Wdr6).